The chain runs to 235 residues: Purine nucleoside phosphorylase DeoD-type (235 aa).

H4 is an a purine D-ribonucleoside binding site. Phosphate is bound by residues G20, R24, R43, and 87 to 90 (RVGT). A purine D-ribonucleoside contacts are provided by residues E162, 179–181 (EME), and 203–204 (SD). The active-site Proton donor is D204.

The protein belongs to the PNP/UDP phosphorylase family. In terms of assembly, homohexamer; trimer of homodimers.

It carries out the reaction a purine D-ribonucleoside + phosphate = a purine nucleobase + alpha-D-ribose 1-phosphate. It catalyses the reaction a purine 2'-deoxy-D-ribonucleoside + phosphate = a purine nucleobase + 2-deoxy-alpha-D-ribose 1-phosphate. Functionally, catalyzes the reversible phosphorolytic breakdown of the N-glycosidic bond in the beta-(deoxy)ribonucleoside molecules, with the formation of the corresponding free purine bases and pentose-1-phosphate. This is Purine nucleoside phosphorylase DeoD-type from Bacillus cereus (strain ZK / E33L).